A 247-amino-acid chain; its full sequence is tRNA uridine(34) hydroxylase (247 aa).

Residues 123–217 enclose the Rhodanese domain; sequence ITKQDVIVDT…YLEDTQNKNN (95 aa). Residue Cys-177 is the Cysteine persulfide intermediate of the active site.

Belongs to the TrhO family.

It carries out the reaction uridine(34) in tRNA + AH2 + O2 = 5-hydroxyuridine(34) in tRNA + A + H2O. Its function is as follows. Catalyzes oxygen-dependent 5-hydroxyuridine (ho5U) modification at position 34 in tRNAs. In Rickettsia bellii (strain RML369-C), this protein is tRNA uridine(34) hydroxylase.